We begin with the raw amino-acid sequence, 367 residues long: Lysophosphatidic acid receptor 5 (367 aa).

At 1-25 (MQANSSAKSLPTECPDYQPIHHLHL) the chain is on the extracellular side. A glycan (N-linked (GlcNAc...) asparagine) is linked at Asn4. Residues 26-46 (VVYSVVLAAGLPLNALALWVF) form a helical membrane-spanning segment. The Cytoplasmic segment spans residues 47–54 (LRALRVHS). Residues 55–75 (VVSVYMCNLAASDLLFTLSLP) form a helical membrane-spanning segment. Residues 76–95 (LRLSYYARHYWPFPDFLCQL) are Extracellular-facing. A disulfide bond links Cys93 and Cys174. Residues 96 to 116 (AGAVFQMNMYGSCIFLTLINV) traverse the membrane as a helical segment. The Cytoplasmic segment spans residues 117–135 (DRYAAIVHPLRLRHLRRPR). The chain crosses the membrane as a helical span at residues 136 to 156 (VARLLCLGVWALILVFAVPTI). At 157 to 186 (LAHQPSSCARDGRNVSLCFESFSDKLWKGS) the chain is on the extracellular side. N-linked (GlcNAc...) asparagine glycosylation is present at Asn170. The chain crosses the membrane as a helical span at residues 187 to 207 (LLPLLLLAEALGFLLPLAAVV). The Cytoplasmic segment spans residues 208–238 (YSSGRVFWTLARPDATRSQRRRKTVRLLLAS). Residues 239 to 259 (LVIFLLCFVPYNATLAVYGLL) form a helical membrane-spanning segment. Over 260 to 275 (RGEVVPASSEARKKVR) the chain is Extracellular. A helical transmembrane segment spans residues 276-296 (GVLMVMVLLAGANCVLDPLVY). Over 297 to 367 (YFSAEGFRNT…FTPSHEDSSF (71 aa)) the chain is Cytoplasmic. Residues 332-350 (LTETAHASTLTTTSQGQLQ) show a composition bias toward low complexity. A disordered region spans residues 332–367 (LTETAHASTLTTTSQGQLQPSDPRSSFTPSHEDSSF). Over residues 351–360 (PSDPRSSFTP) the composition is skewed to polar residues.

Belongs to the G-protein coupled receptor 1 family.

The protein localises to the cell membrane. Receptor for lysophosphatidic acid (LPA), a mediator of diverse cellular activities. This Bos taurus (Bovine) protein is Lysophosphatidic acid receptor 5 (LPAR5).